We begin with the raw amino-acid sequence, 130 residues long: S-adenosylmethionine decarboxylase proenzyme (130 aa).

Ser-63 functions as the Schiff-base intermediate with substrate; via pyruvic acid in the catalytic mechanism. Pyruvic acid (Ser); by autocatalysis is present on Ser-63. His-68 acts as the Proton acceptor; for processing activity in catalysis. Catalysis depends on Cys-83, which acts as the Proton donor; for catalytic activity.

Belongs to the prokaryotic AdoMetDC family. Type 1 subfamily. As to quaternary structure, heterotetramer of two alpha and two beta chains arranged as a dimer of alpha/beta heterodimers. It depends on pyruvate as a cofactor. In terms of processing, is synthesized initially as an inactive proenzyme. Formation of the active enzyme involves a self-maturation process in which the active site pyruvoyl group is generated from an internal serine residue via an autocatalytic post-translational modification. Two non-identical subunits are generated from the proenzyme in this reaction, and the pyruvate is formed at the N-terminus of the alpha chain, which is derived from the carboxyl end of the proenzyme. The post-translation cleavage follows an unusual pathway, termed non-hydrolytic serinolysis, in which the side chain hydroxyl group of the serine supplies its oxygen atom to form the C-terminus of the beta chain, while the remainder of the serine residue undergoes an oxidative deamination to produce ammonia and the pyruvoyl group blocking the N-terminus of the alpha chain.

It catalyses the reaction S-adenosyl-L-methionine + H(+) = S-adenosyl 3-(methylsulfanyl)propylamine + CO2. Its pathway is amine and polyamine biosynthesis; S-adenosylmethioninamine biosynthesis; S-adenosylmethioninamine from S-adenosyl-L-methionine: step 1/1. In terms of biological role, catalyzes the decarboxylation of S-adenosylmethionine to S-adenosylmethioninamine (dcAdoMet), the propylamine donor required for the synthesis of the polyamines spermine and spermidine from the diamine putrescine. This is S-adenosylmethionine decarboxylase proenzyme (speH) from Thermotoga maritima (strain ATCC 43589 / DSM 3109 / JCM 10099 / NBRC 100826 / MSB8).